The chain runs to 269 residues: Protein TORNADO 2 (269 aa).

Residues 1-10 (MPLSNNVIGC) are Cytoplasmic-facing. Residues 11–31 (INFITVLLSIPVIGAGIWLAI) traverse the membrane as a helical segment. Over 32–44 (GTVNSCVKLLQWP) the chain is Extracellular. A helical membrane pass occupies residues 45 to 65 (VIILGVLILLVGLAGFIGGFW). The Cytoplasmic portion of the chain corresponds to 66 to 71 (RITWLL). Residues 72–92 (VVYLIAMLILIVLLGCLVGFI) traverse the membrane as a helical segment. Residues 93 to 231 (YMVTIRGSGH…NIKVDWLKAD (139 aa)) are Extracellular-facing. The N-linked (GlcNAc...) asparagine glycan is linked to Asn-200. A helical membrane pass occupies residues 232–252 (IFLLLALIGLIIVYIIGCCAF). At 253–269 (RNAETEDIFRKYKQGYT) the chain is on the cytoplasmic side.

The protein belongs to the tetraspanin (TM4SF) family. In terms of tissue distribution, expressed in seedlings, roots, leaves, stems, apex, siliques and flowers. Present in ovules, prominently in nucellus and integuments.

The protein resides in the membrane. In terms of biological role, involved in the basipetal transport of auxin (IAA) that modulates growth and organs organization, as well as cell differentiation. Regulates shoot apical meristem (SAM) organization in the peripheral zone. Required for initial meristematic divisions in the epidermal/lateral root cap leading to the formation of epidermal cells and a clone of lateral root cap cells, as well as for the maintenance of the radial pattern of cell specification in the root, thus regulating the distinction between the lateral root cap and epidermis. Together with WIH peptides, promotes megasporogenesis. The polypeptide is Protein TORNADO 2 (TRN2) (Arabidopsis thaliana (Mouse-ear cress)).